Here is a 195-residue protein sequence, read N- to C-terminus: MAHGPRYRVPFRRRREGKTVYRKRLKLLLSGKPRLVVRRFNSNILAQLVEYDPKGDRVIFTIHSNVLKKYGWKGHRGNLPSAYLVGLIAGYEALKRGYKEAVLDIGRYKSTKGNALYAVLKGALDAGLNIPHSETILPSEDRIRGEHIANYAKMLKENEELYKKQFSRYLKEGLDPEQLPNHFEEVKQKIISQYQ.

The protein belongs to the universal ribosomal protein uL18 family. As to quaternary structure, part of the 50S ribosomal subunit. Contacts the 5S and 23S rRNAs.

Its function is as follows. This is one of the proteins that bind and probably mediate the attachment of the 5S RNA into the large ribosomal subunit, where it forms part of the central protuberance. The polypeptide is Large ribosomal subunit protein uL18 (Nanoarchaeum equitans (strain Kin4-M)).